We begin with the raw amino-acid sequence, 325 residues long: GTP 3',8-cyclase (325 aa).

In terms of domain architecture, Radical SAM core spans 4 to 219; that stretch reads TYQREINYLR…DAISAKLGPL (216 aa). Arg-13 contacts GTP. [4Fe-4S] cluster contacts are provided by Cys-20 and Cys-24. Tyr-26 is a binding site for S-adenosyl-L-methionine. A [4Fe-4S] cluster-binding site is contributed by Cys-27. Arg-63 lines the GTP pocket. Gly-67 provides a ligand contact to S-adenosyl-L-methionine. Thr-94 is a binding site for GTP. Residue Ser-118 coordinates S-adenosyl-L-methionine. Lys-155 contacts GTP. Met-189 provides a ligand contact to S-adenosyl-L-methionine. [4Fe-4S] cluster contacts are provided by Cys-254 and Cys-257. Residue 259–261 coordinates GTP; that stretch reads RLR. Cys-271 contacts [4Fe-4S] cluster.

Belongs to the radical SAM superfamily. MoaA family. As to quaternary structure, monomer and homodimer. Requires [4Fe-4S] cluster as cofactor.

The enzyme catalyses GTP + AH2 + S-adenosyl-L-methionine = (8S)-3',8-cyclo-7,8-dihydroguanosine 5'-triphosphate + 5'-deoxyadenosine + L-methionine + A + H(+). The protein operates within cofactor biosynthesis; molybdopterin biosynthesis. Functionally, catalyzes the cyclization of GTP to (8S)-3',8-cyclo-7,8-dihydroguanosine 5'-triphosphate. This is GTP 3',8-cyclase from Pelotomaculum thermopropionicum (strain DSM 13744 / JCM 10971 / SI).